The primary structure comprises 473 residues: Photosystem II CP43 reaction center protein (473 aa).

The propeptide occupies 1 to 14 (MKTLYSPRRFYPVE). Residue threonine 15 is modified to N-acetylthreonine. Position 15 is a phosphothreonine (threonine 15). Helical transmembrane passes span 69–93 (LFEV…PHLA), 134–155 (LLGP…KDRN), 178–200 (KALY…RKIS), 255–275 (KPFA…LSYS), and 291–312 (WFNN…ASQA). Glutamate 367 is a binding site for [CaMn4O5] cluster. A helical transmembrane segment spans residues 447–471 (RARAAAAGFEKGIDRDLEPVLFMTP).

Belongs to the PsbB/PsbC family. PsbC subfamily. As to quaternary structure, PSII is composed of 1 copy each of membrane proteins PsbA, PsbB, PsbC, PsbD, PsbE, PsbF, PsbH, PsbI, PsbJ, PsbK, PsbL, PsbM, PsbT, PsbX, PsbY, PsbZ, Psb30/Ycf12, at least 3 peripheral proteins of the oxygen-evolving complex and a large number of cofactors. It forms dimeric complexes. Binds multiple chlorophylls and provides some of the ligands for the Ca-4Mn-5O cluster of the oxygen-evolving complex. It may also provide a ligand for a Cl- that is required for oxygen evolution. PSII binds additional chlorophylls, carotenoids and specific lipids. serves as cofactor.

The protein localises to the plastid. The protein resides in the chloroplast thylakoid membrane. One of the components of the core complex of photosystem II (PSII). It binds chlorophyll and helps catalyze the primary light-induced photochemical processes of PSII. PSII is a light-driven water:plastoquinone oxidoreductase, using light energy to abstract electrons from H(2)O, generating O(2) and a proton gradient subsequently used for ATP formation. The sequence is that of Photosystem II CP43 reaction center protein from Ranunculus macranthus (Large buttercup).